Here is a 127-residue protein sequence, read N- to C-terminus: Small ribosomal subunit protein uS12 (127 aa).

D89 bears the 3-methylthioaspartic acid mark. Residues 101–127 (ALDTSGVAGRTQRRSKYGAKRPKEAKK) are disordered. Residues 111-127 (TQRRSKYGAKRPKEAKK) are compositionally biased toward basic residues.

The protein belongs to the universal ribosomal protein uS12 family. In terms of assembly, part of the 30S ribosomal subunit. Contacts proteins S8 and S17. May interact with IF1 in the 30S initiation complex.

In terms of biological role, with S4 and S5 plays an important role in translational accuracy. Its function is as follows. Interacts with and stabilizes bases of the 16S rRNA that are involved in tRNA selection in the A site and with the mRNA backbone. Located at the interface of the 30S and 50S subunits, it traverses the body of the 30S subunit contacting proteins on the other side and probably holding the rRNA structure together. The combined cluster of proteins S8, S12 and S17 appears to hold together the shoulder and platform of the 30S subunit. The sequence is that of Small ribosomal subunit protein uS12 from Flavobacterium psychrophilum (strain ATCC 49511 / DSM 21280 / CIP 103535 / JIP02/86).